The primary structure comprises 790 residues: Phenylalanine--tRNA ligase beta subunit (790 aa).

Residues 39–154 (PDSLNTVVTG…ADTPLGESAC (116 aa)) form the tRNA-binding domain. In terms of domain architecture, B5 spans 404–483 (FSPLSLSVRP…FVQKTQKILP (80 aa)). Mg(2+) contacts are provided by aspartate 457, aspartate 463, glutamate 466, and glutamate 467. Residues 694-790 (PIYPASSRDI…KLANIGQGNS (97 aa)) form the FDX-ACB domain.

Belongs to the phenylalanyl-tRNA synthetase beta subunit family. Type 1 subfamily. As to quaternary structure, tetramer of two alpha and two beta subunits. It depends on Mg(2+) as a cofactor.

The protein localises to the cytoplasm. The enzyme catalyses tRNA(Phe) + L-phenylalanine + ATP = L-phenylalanyl-tRNA(Phe) + AMP + diphosphate + H(+). The polypeptide is Phenylalanine--tRNA ligase beta subunit (Chlamydia trachomatis serovar A (strain ATCC VR-571B / DSM 19440 / HAR-13)).